A 607-amino-acid polypeptide reads, in one-letter code: Autophagy-related protein 22-2 (607 aa).

Residues 1 to 29 form a disordered region; the sequence is MTVAPPSPNSPAAELQQRPPRYPGEDTTP. A helical transmembrane segment spans residues 41–61; sequence YGIAAEVFAVCGVGSFLPLTL. Asn-89 carries an N-linked (GlcNAc...) asparagine glycan. 3 helical membrane passes run 119-139, 151-170, and 188-208; these read SFAMYTFSLAVLVQALTLISF, TLLLAFGFIGSATSMLFVFI, and CLGSSFVVLNSFLPVLVANDP. The tract at residues 235–263 is disordered; sequence SFSASDAESGPHPAAEAGSGTSSGPASPE. The span at 247–263 shows a compositional bias: low complexity; it reads PAAEAGSGTSSGPASPE. 4 consecutive transmembrane segments (helical) span residues 274–294, 307–327, 379–399, and 415–435; these read GVGLGYCAAVLVQILSISLLF, TLPLRFVLLLVGIWWFSFTMV, VLVFLAAWFLLSDAMATVSGT, and VGLLSITATLSGMAGAFLWPV. N-linked (GlcNAc...) asparagine glycosylation is present at Asn-445. A run of 4 helical transmembrane segments spans residues 450–470, 485–507, 519–541, and 550–570; these read LCIALFEIIPLYGMLAYIPVF, FPLAIVHGVVSGGLSSYCRSFFG, YALYAATDKGSSVIGPAIVGMLI, and GFFFIAPLILMPIPLIWIVNA. The tract at residues 586 to 607 is disordered; it reads KGHETEMSEQTEEAEGLLARGI.

Belongs to the ATG22 family.

It localises to the vacuole membrane. Functionally, vacuolar effluxer which mediate the efflux of amino acids resulting from autophagic degradation. The release of autophagic amino acids allows the maintenance of protein synthesis and viability during nitrogen starvation. This is Autophagy-related protein 22-2 (atg22-2) from Aspergillus oryzae (strain ATCC 42149 / RIB 40) (Yellow koji mold).